The primary structure comprises 46 residues: MGPAVVFDCMTADFLNDDPNNAELSSLEMEELESWGAWSDDTDQSV.

Residues 10 to 46 (MTADFLNDDPNNAELSSLEMEELESWGAWSDDTDQSV) constitute a propeptide that is removed on maturation.

Post-translationally, the precursor peptide is first ribosomally synthesized and then highly tailored by specific enzymes to yield the final natural product. These modifications include several methylations, cyclization and the formation of t-Leu and Thia-beta-Ala residues.

Its subcellular location is the secreted. Functionally, bottromycin D is a ribosomally synthesized and post-translationally modified peptide (RiPP) that displays antibiotic activity against methicillin-resistant S.aureus (MRSA). The chain is Bottromycin D from Streptomyces sp.